The following is a 702-amino-acid chain: Ribosomal RNA large subunit methyltransferase K/L (702 aa).

The 112-residue stretch at 43–154 (LIYQSLMWSR…KETASIALDL (112 aa)) folds into the THUMP domain.

Belongs to the methyltransferase superfamily. RlmKL family.

It is found in the cytoplasm. It catalyses the reaction guanosine(2445) in 23S rRNA + S-adenosyl-L-methionine = N(2)-methylguanosine(2445) in 23S rRNA + S-adenosyl-L-homocysteine + H(+). The enzyme catalyses guanosine(2069) in 23S rRNA + S-adenosyl-L-methionine = N(2)-methylguanosine(2069) in 23S rRNA + S-adenosyl-L-homocysteine + H(+). Its function is as follows. Specifically methylates the guanine in position 2445 (m2G2445) and the guanine in position 2069 (m7G2069) of 23S rRNA. The chain is Ribosomal RNA large subunit methyltransferase K/L from Salmonella gallinarum (strain 287/91 / NCTC 13346).